A 212-amino-acid chain; its full sequence is Abscisic acid receptor PYL10 (212 aa).

The tract at residues 34-191 is START-like; that stretch reads YAVGPGQCSS…NLQKLKSVSE (158 aa). Abscisate contacts are provided by residues Lys70, 107–112, 134–140, and Glu156; these read ASTSTE and RLRNYRS. Positions 103-107 match the Gate loop motif; sequence SGLPA. The Latch loop signature appears at 133 to 135; that stretch reads HRL.

This sequence belongs to the PYR/PYL/RCAR abscisic acid intracellular receptor family. In terms of assembly, homodimer. Interacts with PP2C53. Binding to PP2C53 is dependent on the presence of abscisic acid (ABA). Interacts with PP2C50. Binding to PP2C50 is dependent on the presence of ABA.

It is found in the cytoplasm. The protein localises to the cytosol. The protein resides in the nucleus. In terms of biological role, inhibits the protein phosphatases PP2C06 and PP2C09 when activated by abscisic acid (ABA). Together with PP2C53, SAPK8 and SAPK10, may form an ABA signaling module involved in stress response. In Oryza sativa subsp. japonica (Rice), this protein is Abscisic acid receptor PYL10.